The sequence spans 1099 residues: DNA-directed RNA polymerase subunit beta (1099 aa).

This sequence belongs to the RNA polymerase beta chain family. In terms of assembly, in plastids the minimal PEP RNA polymerase catalytic core is composed of four subunits: alpha, beta, beta', and beta''. When a (nuclear-encoded) sigma factor is associated with the core the holoenzyme is formed, which can initiate transcription.

The protein resides in the plastid. It is found in the chloroplast. It carries out the reaction RNA(n) + a ribonucleoside 5'-triphosphate = RNA(n+1) + diphosphate. Functionally, DNA-dependent RNA polymerase catalyzes the transcription of DNA into RNA using the four ribonucleoside triphosphates as substrates. The chain is DNA-directed RNA polymerase subunit beta from Bigelowiella natans (Pedinomonas minutissima).